Consider the following 395-residue polypeptide: Elongation factor Tu (395 aa).

One can recognise a tr-type G domain in the interval 10–204 (KPHVNIGTIG…EVDAYIPTPE (195 aa)). Residues 19 to 26 (GHVDHGKT) are G1. 19-26 (GHVDHGKT) is a GTP binding site. Residue threonine 26 participates in Mg(2+) binding. The segment at 60–64 (GITIS) is G2. A G3 region spans residues 81-84 (DCPG). GTP-binding positions include 81–85 (DCPGH) and 136–139 (NKCD). Positions 136 to 139 (NKCD) are G4. A G5 region spans residues 174–176 (SAL).

This sequence belongs to the TRAFAC class translation factor GTPase superfamily. Classic translation factor GTPase family. EF-Tu/EF-1A subfamily. Monomer.

The protein localises to the cytoplasm. The catalysed reaction is GTP + H2O = GDP + phosphate + H(+). GTP hydrolase that promotes the GTP-dependent binding of aminoacyl-tRNA to the A-site of ribosomes during protein biosynthesis. The chain is Elongation factor Tu from Bacillus cereus (strain ATCC 10987 / NRS 248).